A 341-amino-acid chain; its full sequence is Phosphoribosylformylglycinamidine cyclo-ligase (341 aa).

The protein belongs to the AIR synthase family.

It is found in the cytoplasm. The enzyme catalyses 2-formamido-N(1)-(5-O-phospho-beta-D-ribosyl)acetamidine + ATP = 5-amino-1-(5-phospho-beta-D-ribosyl)imidazole + ADP + phosphate + H(+). It participates in purine metabolism; IMP biosynthesis via de novo pathway; 5-amino-1-(5-phospho-D-ribosyl)imidazole from N(2)-formyl-N(1)-(5-phospho-D-ribosyl)glycinamide: step 2/2. The polypeptide is Phosphoribosylformylglycinamidine cyclo-ligase (Lachnospira eligens (strain ATCC 27750 / DSM 3376 / VPI C15-48 / C15-B4) (Eubacterium eligens)).